A 343-amino-acid chain; its full sequence is 4-hydroxy-2-oxovalerate aldolase (343 aa).

The region spanning 5 to 256 (ILLCDPTLRD…ETGIDLYKIL (252 aa)) is the Pyruvate carboxyltransferase domain. 13–14 (RD) lines the substrate pocket. Mn(2+) is bound at residue D14. The active-site Proton acceptor is H17. Residues S168 and H195 each contribute to the substrate site. Residues H195 and H197 each coordinate Mn(2+).

Belongs to the 4-hydroxy-2-oxovalerate aldolase family. In terms of assembly, interacts with MhpF.

It carries out the reaction (S)-4-hydroxy-2-oxopentanoate = acetaldehyde + pyruvate. The protein operates within aromatic compound metabolism; 3-phenylpropanoate degradation. Catalyzes the retro-aldol cleavage of 4-hydroxy-2-oxopentanoate to pyruvate and acetaldehyde. Is involved in the meta-cleavage pathway for the degradation of aromatic compounds. The protein is 4-hydroxy-2-oxovalerate aldolase of Pectobacterium atrosepticum (strain SCRI 1043 / ATCC BAA-672) (Erwinia carotovora subsp. atroseptica).